The primary structure comprises 244 residues: 2,5-diamino-6-ribosylamino-4(3H)-pyrimidinone 5'-phosphate reductase (244 aa).

NADP(+) contacts are provided by residues Thr-74, Asp-78, Ile-160, and 183–187 (GSHVI).

The protein belongs to the HTP reductase family. In terms of assembly, homodimer.

The enzyme catalyses 2,5-diamino-6-(1-D-ribitylamino)pyrimidin-4(3H)-one 5'-phosphate + NADP(+) = 2,5-diamino-6-(1-D-ribosylamino)pyrimidin-4(3H)-one 5'-phosphate + NADPH + H(+). It carries out the reaction 2,5-diamino-6-(1-D-ribitylamino)pyrimidin-4(3H)-one 5'-phosphate + NAD(+) = 2,5-diamino-6-(1-D-ribosylamino)pyrimidin-4(3H)-one 5'-phosphate + NADH + H(+). Its pathway is cofactor biosynthesis; riboflavin biosynthesis. In terms of biological role, catalyzes an early step in riboflavin biosynthesis, the NADPH-dependent reduction of the ribose side chain of 2,5-diamino-6-ribosylamino-4(3H)-pyrimidinone 5'-phosphate, yielding 2,5-diamino-6-ribitylamino-4(3H)-pyrimidinone 5'-phosphate. This Candida glabrata (strain ATCC 2001 / BCRC 20586 / JCM 3761 / NBRC 0622 / NRRL Y-65 / CBS 138) (Yeast) protein is 2,5-diamino-6-ribosylamino-4(3H)-pyrimidinone 5'-phosphate reductase (RIB7).